Consider the following 184-residue polypeptide: Photosystem I assembly protein Ycf4 (184 aa).

Transmembrane regions (helical) follow at residues 22 to 42 (FCWA…GTSS) and 57 to 77 (IVFF…LFIS).

This sequence belongs to the Ycf4 family.

Its subcellular location is the plastid. It is found in the chloroplast thylakoid membrane. In terms of biological role, seems to be required for the assembly of the photosystem I complex. This chain is Photosystem I assembly protein Ycf4, found in Gossypium barbadense (Sea Island cotton).